We begin with the raw amino-acid sequence, 640 residues long: Threonine--tRNA ligase (640 aa).

Residues 224–525 (DHRKLGKELD…LTEHYAGAFP (302 aa)) are catalytic. 3 residues coordinate Zn(2+): C323, H374, and H502.

Belongs to the class-II aminoacyl-tRNA synthetase family. As to quaternary structure, homodimer. Requires Zn(2+) as cofactor.

The protein resides in the cytoplasm. The catalysed reaction is tRNA(Thr) + L-threonine + ATP = L-threonyl-tRNA(Thr) + AMP + diphosphate + H(+). Functionally, catalyzes the attachment of threonine to tRNA(Thr) in a two-step reaction: L-threonine is first activated by ATP to form Thr-AMP and then transferred to the acceptor end of tRNA(Thr). Also edits incorrectly charged L-seryl-tRNA(Thr). This is Threonine--tRNA ligase from Tropheryma whipplei (strain TW08/27) (Whipple's bacillus).